The following is a 125-amino-acid chain: Large ribosomal subunit protein bL12 (125 aa).

This sequence belongs to the bacterial ribosomal protein bL12 family. In terms of assembly, homodimer. Part of the ribosomal stalk of the 50S ribosomal subunit. Forms a multimeric L10(L12)X complex, where L10 forms an elongated spine to which 2 to 4 L12 dimers bind in a sequential fashion. Binds GTP-bound translation factors.

Its function is as follows. Forms part of the ribosomal stalk which helps the ribosome interact with GTP-bound translation factors. Is thus essential for accurate translation. This chain is Large ribosomal subunit protein bL12, found in Methylibium petroleiphilum (strain ATCC BAA-1232 / LMG 22953 / PM1).